The following is a 372-amino-acid chain: UDP-N-acetylenolpyruvoylglucosamine reductase (372 aa).

Residues 29-205 form the FAD-binding PCMH-type domain; sequence VGPTARRLIT…LEVEFALDAS (177 aa). R177 is an active-site residue. The active-site Proton donor is the S260. E364 is a catalytic residue.

It belongs to the MurB family. The cofactor is FAD.

The protein localises to the cytoplasm. It catalyses the reaction UDP-N-acetyl-alpha-D-muramate + NADP(+) = UDP-N-acetyl-3-O-(1-carboxyvinyl)-alpha-D-glucosamine + NADPH + H(+). It participates in cell wall biogenesis; peptidoglycan biosynthesis. Cell wall formation. The chain is UDP-N-acetylenolpyruvoylglucosamine reductase from Mycobacterium avium (strain 104).